Reading from the N-terminus, the 403-residue chain is Phosphopentomutase (403 aa).

6 residues coordinate Mn(2+): aspartate 13, aspartate 298, histidine 303, aspartate 339, histidine 340, and histidine 351.

Belongs to the phosphopentomutase family. Mn(2+) serves as cofactor.

The protein localises to the cytoplasm. It catalyses the reaction 2-deoxy-alpha-D-ribose 1-phosphate = 2-deoxy-D-ribose 5-phosphate. It carries out the reaction alpha-D-ribose 1-phosphate = D-ribose 5-phosphate. It participates in carbohydrate degradation; 2-deoxy-D-ribose 1-phosphate degradation; D-glyceraldehyde 3-phosphate and acetaldehyde from 2-deoxy-alpha-D-ribose 1-phosphate: step 1/2. Its function is as follows. Isomerase that catalyzes the conversion of deoxy-ribose 1-phosphate (dRib-1-P) and ribose 1-phosphate (Rib-1-P) to deoxy-ribose 5-phosphate (dRib-5-P) and ribose 5-phosphate (Rib-5-P), respectively. This chain is Phosphopentomutase, found in Streptococcus thermophilus (strain CNRZ 1066).